Consider the following 93-residue polypeptide: UPF0250 protein PSPA7_1111 (93 aa).

This sequence belongs to the UPF0250 family.

This chain is UPF0250 protein PSPA7_1111, found in Pseudomonas paraeruginosa (strain DSM 24068 / PA7) (Pseudomonas aeruginosa (strain PA7)).